The chain runs to 331 residues: FMRFamide-related neuropeptides (331 aa).

The signal sequence occupies residues 1–25 (MRCWSPCSLLVVIVIYCLSSHTSEA). Residues 26–65 (FDLAQACVESQRLSLLPICDTIFAVQQEGVQQSADDGMRS) constitute a propeptide that is removed on maturation. Phenylalanine amide occurs at positions 71 and 83. Positions 86 to 94 (NVPDLPFED) are excised as a propeptide. Phe100 carries the post-translational modification Phenylalanine amide. A propeptide spanning residues 103–168 (AAPQLDELLK…YIDDVEDSDV (66 aa)) is cleaved from the precursor. The disordered stretch occupies residues 122–158 (QKADETSVRRKRSTDAAPQNNAENPEQKNDSAKITKR). Residues 146–158 (PEQKNDSAKITKR) are compositionally biased toward basic and acidic residues. Residues Phe174 and Phe181 each carry the phenylalanine amide modification. A propeptide spanning residues 184–194 (NPSDVGNKLTE) is cleaved from the precursor. Phe200 carries the post-translational modification Phenylalanine amide. Positions 203–205 (DPE) are excised as a propeptide. Phenylalanine amide is present on Phe211. Positions 214 to 216 (SDD) are excised as a propeptide. Phe222 carries the phenylalanine amide modification. Positions 225-236 (NPSDAEDELEED) are excised as a propeptide. The residue at position 242 (Phe242) is a Phenylalanine amide. A propeptide spanning residues 245-254 (GGEDDEEEAE) is cleaved from the precursor. Residue Phe260 is modified to Phenylalanine amide. Residues 263–265 (DPE) constitute a propeptide that is removed on maturation. Phe271 bears the Phenylalanine amide mark. Residues 274-277 (SGED) constitute a propeptide that is removed on maturation. Residues 279–296 (RFMRFGRNPDEQEADKRF) are compositionally biased toward basic and acidic residues. Residues 279 to 310 (RFMRFGRNPDEQEADKRFMRFGRGGEDDEVST) are disordered. Phe283 bears the Phenylalanine amide mark. A propeptide spanning residues 286 to 293 (NPDEQEAD) is cleaved from the precursor. Phe299 bears the Phenylalanine amide mark. A propeptide spanning residues 302 to 312 (GGEDDEVSTED) is cleaved from the precursor. Phenylalanine amide is present on Phe318. The propeptide occupies 321-331 (SADKCKGCLEG).

It belongs to the FARP (FMRFamide related peptide) family.

It localises to the secreted. Its function is as follows. Excitatory neurotransmitters that directly modulate chromatophore function by activating chromatophore expansion at the chromatophore neuromuscular junction. The sequence is that of FMRFamide-related neuropeptides from Doryteuthis opalescens (California market squid).